A 347-amino-acid chain; its full sequence is Mitochondrial glycine transporter (347 aa).

Solcar repeat units lie at residues 18 to 102 (SKPT…LRTA), 138 to 222 (LSHT…SKRS), and 247 to 331 (STAS…LIMW). Transmembrane regions (helical) follow at residues 24–49 (FAAG…TRVQ), 77–103 (GTLP…RTAV), 144–169 (LITG…VRYE), 197–220 (GFGA…EQSK), 251–277 (INFI…KTRV), and 306–324 (GLGL…AWTV).

It belongs to the mitochondrial carrier (TC 2.A.29) family. SLC25A38 subfamily.

Its subcellular location is the mitochondrion inner membrane. The catalysed reaction is glycine(in) = glycine(out). Functionally, mitochondrial glycine transporter that imports glycine into the mitochondrial matrix. Plays an important role in providing glycine for the first enzymatic step in heme biosynthesis, the condensation of glycine with succinyl-CoA to produce 5-aminolevulinate (ALA) in the mitochondrial matrix. In Coccidioides immitis (strain RS) (Valley fever fungus), this protein is Mitochondrial glycine transporter.